Reading from the N-terminus, the 251-residue chain is YlmG homolog protein 2, chloroplastic (251 aa).

The N-terminal 51 residues, 1 to 51 (MEASANEPAMKSLKSNPSGPIPNFFVSLSSAFTQTPLVRSNKPNLLLLPPV), are a transit peptide targeting the chloroplast. The next 2 helical transmembrane spans lie at 119 to 139 (GFAA…NGLI) and 183 to 203 (FIPP…VLNA). Over residues 232–243 (VRRRRLSSHKDH) the composition is skewed to basic residues. A disordered region spans residues 232 to 251 (VRRRRLSSHKDHRPSSASMT).

The protein belongs to the YggT family.

It localises to the plastid. It is found in the chloroplast thylakoid membrane. Its function is as follows. Not required for the biogenesis and accumulation of native cytochrome b6 in the thylakoid membrane. Not functionally involved in the pathway for covalent binding of the c-type heme to cytochrome b6. In Arabidopsis thaliana (Mouse-ear cress), this protein is YlmG homolog protein 2, chloroplastic.